The chain runs to 402 residues: UDP-N-acetylmuramoylalanine--D-glutamate ligase (402 aa).

Residue 97 to 103 (GTNGKTT) participates in ATP binding.

The protein belongs to the MurCDEF family.

It localises to the cytoplasm. The catalysed reaction is UDP-N-acetyl-alpha-D-muramoyl-L-alanine + D-glutamate + ATP = UDP-N-acetyl-alpha-D-muramoyl-L-alanyl-D-glutamate + ADP + phosphate + H(+). Its pathway is cell wall biogenesis; peptidoglycan biosynthesis. Functionally, cell wall formation. Catalyzes the addition of glutamate to the nucleotide precursor UDP-N-acetylmuramoyl-L-alanine (UMA). This Campylobacter jejuni (strain RM1221) protein is UDP-N-acetylmuramoylalanine--D-glutamate ligase.